The chain runs to 203 residues: Holliday junction branch migration complex subunit RuvA (203 aa).

The tract at residues 1 to 64 is domain I; the sequence is MIGRLRGYIL…EDAQLLYGFN (64 aa). The interval 65 to 142 is domain II; that stretch reads DKQERALFRE…KGLNGDLFNN (78 aa). The segment at 143–154 is flexible linker; the sequence is SSEITLPTAAQA. A domain III region spans residues 155 to 203; the sequence is AELDAEAEAASALVALGYKPQEASRMVSKIAKPGADCETLIRDALRAAL.

Belongs to the RuvA family. As to quaternary structure, homotetramer. Forms an RuvA(8)-RuvB(12)-Holliday junction (HJ) complex. HJ DNA is sandwiched between 2 RuvA tetramers; dsDNA enters through RuvA and exits via RuvB. An RuvB hexamer assembles on each DNA strand where it exits the tetramer. Each RuvB hexamer is contacted by two RuvA subunits (via domain III) on 2 adjacent RuvB subunits; this complex drives branch migration. In the full resolvosome a probable DNA-RuvA(4)-RuvB(12)-RuvC(2) complex forms which resolves the HJ.

The protein resides in the cytoplasm. In terms of biological role, the RuvA-RuvB-RuvC complex processes Holliday junction (HJ) DNA during genetic recombination and DNA repair, while the RuvA-RuvB complex plays an important role in the rescue of blocked DNA replication forks via replication fork reversal (RFR). RuvA specifically binds to HJ cruciform DNA, conferring on it an open structure. The RuvB hexamer acts as an ATP-dependent pump, pulling dsDNA into and through the RuvAB complex. HJ branch migration allows RuvC to scan DNA until it finds its consensus sequence, where it cleaves and resolves the cruciform DNA. The sequence is that of Holliday junction branch migration complex subunit RuvA from Serratia proteamaculans (strain 568).